We begin with the raw amino-acid sequence, 446 residues long: Transcriptional adapter 2-alpha (446 aa).

The segment at 12-69 (FDKPPCRGCSSYLTEPYVKCAECGPPPFLLCLQCFTRGFEYKKHQSDHTYEIMTSDFP) adopts a ZZ-type zinc-finger fold. Residues C17, C20, C31, C34, C42, C45, H55, and H59 each coordinate Zn(2+). Positions 70–122 (VLDPNWTAQEEMALLEAVMDCGFGNWQDVANQMCTKSKEECEKHYMKHFINNP) constitute an SANT domain. The segment at 345 to 375 (DIDSGPTPAAPIPSNSGRRSAPPLNLTGLPG) is disordered. In terms of domain architecture, SWIRM spans 359–446 (NSGRRSAPPL…LIREGYITKA (88 aa)). Residues 429 to 438 (KTRKIYDFLI) mediate DNA binding.

The protein resides in the nucleus. The protein localises to the chromosome. In terms of biological role, component of some complex with histone acetyltransferase activity. Required for the function of some acidic activation domains, which activate transcription from a distant site. Binds double-stranded DNA. Binds dinucleosomes, probably at the linker region between neighboring nucleosomes. Plays a role in chromatin remodeling. The polypeptide is Transcriptional adapter 2-alpha (TADA2A) (Gallus gallus (Chicken)).